A 238-amino-acid polypeptide reads, in one-letter code: Nucleoside diphosphate kinase III, chloroplastic/mitochondrial (238 aa).

Residues 1–85 (MSSQICRSAS…YMIQDQEVLA (85 aa)) constitute a chloroplast and mitochondrion transit peptide. 6 residues coordinate ATP: K96, F144, R172, T178, R189, and N199. The active-site Pros-phosphohistidine intermediate is the H202.

It belongs to the NDK family. As to quaternary structure, homohexamer. It depends on Mg(2+) as a cofactor.

The protein resides in the plastid. The protein localises to the chloroplast thylakoid lumen. Its subcellular location is the mitochondrion intermembrane space. It catalyses the reaction a 2'-deoxyribonucleoside 5'-diphosphate + ATP = a 2'-deoxyribonucleoside 5'-triphosphate + ADP. The enzyme catalyses a ribonucleoside 5'-diphosphate + ATP = a ribonucleoside 5'-triphosphate + ADP. Functionally, major role in the synthesis of nucleoside triphosphates other than ATP. The ATP gamma phosphate is transferred to the NDP beta phosphate via a ping-pong mechanism, using a phosphorylated active-site intermediate. Shows the highest specificity towards GDP. The sequence is that of Nucleoside diphosphate kinase III, chloroplastic/mitochondrial (NDPK3) from Arabidopsis thaliana (Mouse-ear cress).